The sequence spans 204 residues: Large ribosomal subunit protein eL15 (204 aa).

Residues 185–204 (GGSRRAAWKRKNREHMHRKR) form a disordered region. Positions 190-204 (AAWKRKNREHMHRKR) are enriched in basic residues.

The protein belongs to the eukaryotic ribosomal protein eL15 family.

The protein is Large ribosomal subunit protein eL15 (RpL15) of Drosophila melanogaster (Fruit fly).